We begin with the raw amino-acid sequence, 249 residues long: Triosephosphate isomerase (249 aa).

Residue Asn8–Lys10 coordinates substrate. Catalysis depends on His95, which acts as the Electrophile. Residue Glu166 is the Proton acceptor of the active site. Substrate contacts are provided by residues Gly172, Ser211, and Gly232–Gly233.

The protein belongs to the triosephosphate isomerase family. As to quaternary structure, homodimer.

The protein resides in the cytoplasm. It catalyses the reaction D-glyceraldehyde 3-phosphate = dihydroxyacetone phosphate. The protein operates within carbohydrate biosynthesis; gluconeogenesis. Its pathway is carbohydrate degradation; glycolysis; D-glyceraldehyde 3-phosphate from glycerone phosphate: step 1/1. In terms of biological role, involved in the gluconeogenesis. Catalyzes stereospecifically the conversion of dihydroxyacetone phosphate (DHAP) to D-glyceraldehyde-3-phosphate (G3P). This Granulibacter bethesdensis (strain ATCC BAA-1260 / CGDNIH1) protein is Triosephosphate isomerase.